A 360-amino-acid polypeptide reads, in one-letter code: Tubulin-like protein CetZ2 (360 aa).

GTP contacts are provided by residues 10–14 (QAGGK), 65–66 (GG), 106–108 (GSG), Glu138, Asn165, and Asn183. Over residues 334–354 (EAIDKAETEPREDPKGMWHSD) the composition is skewed to basic and acidic residues. A disordered region spans residues 334–360 (EAIDKAETEPREDPKGMWHSDDLDDLL).

It belongs to the CetZ family.

It localises to the cytoplasm. Its function is as follows. Involved in cell shape control. The protein is Tubulin-like protein CetZ2 of Haloferax volcanii (strain ATCC 29605 / DSM 3757 / JCM 8879 / NBRC 14742 / NCIMB 2012 / VKM B-1768 / DS2) (Halobacterium volcanii).